A 171-amino-acid polypeptide reads, in one-letter code: Adenine phosphoribosyltransferase (171 aa).

Belongs to the purine/pyrimidine phosphoribosyltransferase family. Homodimer.

The protein localises to the cytoplasm. The catalysed reaction is AMP + diphosphate = 5-phospho-alpha-D-ribose 1-diphosphate + adenine. The protein operates within purine metabolism; AMP biosynthesis via salvage pathway; AMP from adenine: step 1/1. Its function is as follows. Catalyzes a salvage reaction resulting in the formation of AMP, that is energically less costly than de novo synthesis. This chain is Adenine phosphoribosyltransferase, found in Christiangramia forsetii (strain DSM 17595 / CGMCC 1.15422 / KT0803) (Gramella forsetii).